The following is a 169-amino-acid chain: MPLLDSFTVDHTRMNAPAVRVAKHMSTPKGDAITVFDLRFCAPNKDILSERGIHTLEHLFAGFMRDHLNGSDVEIIDISPMGCRTGFYMSLIGEPSERQVADAWLASMEDVLKVVEQSEIPELNEYQCGTYQMHSLEQAQDIARNIIAAGVSVNRNDDLKLSDEILGKL.

Residues His54, His58, and Cys128 each contribute to the Fe cation site.

The protein belongs to the LuxS family. In terms of assembly, homodimer. The cofactor is Fe cation.

It carries out the reaction S-(5-deoxy-D-ribos-5-yl)-L-homocysteine = (S)-4,5-dihydroxypentane-2,3-dione + L-homocysteine. Its function is as follows. Involved in the synthesis of autoinducer 2 (AI-2) which is secreted by bacteria and is used to communicate both the cell density and the metabolic potential of the environment. The regulation of gene expression in response to changes in cell density is called quorum sensing. Catalyzes the transformation of S-ribosylhomocysteine (RHC) to homocysteine (HC) and 4,5-dihydroxy-2,3-pentadione (DPD). The protein is S-ribosylhomocysteine lyase of Shewanella sp. (strain MR-4).